We begin with the raw amino-acid sequence, 136 residues long: uncharacterized protein (136 aa).

The N-terminal stretch at 1-35 (MTHRAVPCQPRAFSKIKVLVISFLFLMVAFLPFSS) is a signal peptide.

This is an uncharacterized protein from Saccharomyces cerevisiae (strain ATCC 204508 / S288c) (Baker's yeast).